Reading from the N-terminus, the 363-residue chain is Protein RecA (363 aa).

79–86 (GPESSGKT) serves as a coordination point for ATP.

This sequence belongs to the RecA family.

Its subcellular location is the cytoplasm. In terms of biological role, can catalyze the hydrolysis of ATP in the presence of single-stranded DNA, the ATP-dependent uptake of single-stranded DNA by duplex DNA, and the ATP-dependent hybridization of homologous single-stranded DNAs. It interacts with LexA causing its activation and leading to its autocatalytic cleavage. The protein is Protein RecA of Borrelia turicatae (strain 91E135).